The following is a 366-amino-acid chain: Chorismate synthase (366 aa).

NADP(+)-binding residues include R48 and R54. Residues 132–134 (RSS), 244–245 (NA), G289, 304–308 (KPTSS), and R330 each bind FMN.

Belongs to the chorismate synthase family. Homotetramer. Requires FMNH2 as cofactor.

The catalysed reaction is 5-O-(1-carboxyvinyl)-3-phosphoshikimate = chorismate + phosphate. It functions in the pathway metabolic intermediate biosynthesis; chorismate biosynthesis; chorismate from D-erythrose 4-phosphate and phosphoenolpyruvate: step 7/7. Its function is as follows. Catalyzes the anti-1,4-elimination of the C-3 phosphate and the C-6 proR hydrogen from 5-enolpyruvylshikimate-3-phosphate (EPSP) to yield chorismate, which is the branch point compound that serves as the starting substrate for the three terminal pathways of aromatic amino acid biosynthesis. This reaction introduces a second double bond into the aromatic ring system. This Methylorubrum extorquens (strain PA1) (Methylobacterium extorquens) protein is Chorismate synthase.